We begin with the raw amino-acid sequence, 179 residues long: uncharacterized protein (179 aa).

A helical membrane pass occupies residues methionine 5 to leucine 25.

The protein to Rickettsia 17 kDa surface antigen.

It localises to the membrane. This is an uncharacterized protein from Escherichia coli O6:H1 (strain CFT073 / ATCC 700928 / UPEC).